The sequence spans 109 residues: uncharacterized protein (109 aa).

Residues 12 to 32 (PNILIKGVYIFVLYGMCICIV) traverse the membrane as a helical segment.

The protein localises to the membrane. This is an uncharacterized protein from Saccharomyces cerevisiae (strain ATCC 204508 / S288c) (Baker's yeast).